Consider the following 143-residue polypeptide: MAIERTFSIIKPNAVAKNVIGSIFARFETAGFKIVGTKMLHLTVEQARGFYAEHDGKPFFDGLVEFMTSGPIVVSVLEGENAVQRHRDLLGATNPANALAGTLRADYADSLTENGTHGSDSVESAAREIAYFFGEGEVCPRTR.

ATP is bound by residues Lys11, Phe59, Arg87, Thr93, Arg104, and Asn114. Catalysis depends on His117, which acts as the Pros-phosphohistidine intermediate.

It belongs to the NDK family. In terms of assembly, homotetramer. It depends on Mg(2+) as a cofactor.

It is found in the cytoplasm. It catalyses the reaction a 2'-deoxyribonucleoside 5'-diphosphate + ATP = a 2'-deoxyribonucleoside 5'-triphosphate + ADP. It carries out the reaction a ribonucleoside 5'-diphosphate + ATP = a ribonucleoside 5'-triphosphate + ADP. Its function is as follows. Major role in the synthesis of nucleoside triphosphates other than ATP. The ATP gamma phosphate is transferred to the NDP beta phosphate via a ping-pong mechanism, using a phosphorylated active-site intermediate. This is Nucleoside diphosphate kinase from Escherichia coli O81 (strain ED1a).